Consider the following 239-residue polypeptide: 7-cyano-7-deazaguanine synthase (239 aa).

13-23 (FSGGQDSTTCL) contributes to the ATP binding site. C192, C201, C204, and C207 together coordinate Zn(2+).

This sequence belongs to the QueC family. Requires Zn(2+) as cofactor.

It catalyses the reaction 7-carboxy-7-deazaguanine + NH4(+) + ATP = 7-cyano-7-deazaguanine + ADP + phosphate + H2O + H(+). It participates in purine metabolism; 7-cyano-7-deazaguanine biosynthesis. Catalyzes the ATP-dependent conversion of 7-carboxy-7-deazaguanine (CDG) to 7-cyano-7-deazaguanine (preQ(0)). This chain is 7-cyano-7-deazaguanine synthase, found in Shewanella sp. (strain MR-4).